A 173-amino-acid polypeptide reads, in one-letter code: Alpha-crystallin A chain (173 aa).

Met-1 carries the N-acetylmethionine modification. The required for complex formation with BFSP1 and BFSP2 stretch occupies residues 1-63; it reads MDIAIQHPWF…RTVLDSGISE (63 aa). Gln-6 is modified (deamidated glutamine; partial). Ser-45 is modified (phosphoserine). Deamidated glutamine; partial is present on Gln-50. The sHSP domain maps to 52-162; it reads LFRTVLDSGI…GHSERAIPVS (111 aa). N6-acetyllysine is present on Lys-70. Gln-90 bears the Deamidated glutamine; partial mark. Position 99 is an N6-acetyllysine (Lys-99). A Zn(2+)-binding site is contributed by His-100. Asn-101 bears the Deamidated asparagine; partial mark. Positions 102 and 107 each coordinate Zn(2+). Ser-122 is modified (phosphoserine). Position 123 is a deamidated asparagine; partial (Asn-123). Positions 144 to 173 are disordered; sequence PKIPSGMDAGHSERAIPVSREEKPGSAPSS. The segment covering 153 to 167 has biased composition (basic and acidic residues); that stretch reads GHSERAIPVSREEKP. His-154 provides a ligand contact to Zn(2+). Ser-162 is a glycosylation site (O-linked (GlcNAc) serine).

Belongs to the small heat shock protein (HSP20) family. Heteromer composed of three CRYAA and one CRYAB subunits. Inter-subunit bridging via zinc ions enhances stability, which is crucial as there is no protein turn over in the lens. Can also form homodimers and homotetramers (dimers of dimers) which serve as the building blocks of homooligomers. Within homooligomers, the zinc-binding motif is created from residues of 3 different molecules. His-100 and Glu-102 from one molecule are ligands of the zinc ion, and His-107 and His-154 residues from additional molecules complete the site with tetrahedral coordination geometry. Part of a complex required for lens intermediate filament formation composed of BFSP1, BFSP2 and CRYAA. Acetylation at Lys-70 may increase chaperone activity. In terms of processing, undergoes age-dependent proteolytical cleavage at the C-terminus.

It localises to the cytoplasm. It is found in the nucleus. Its function is as follows. Contributes to the transparency and refractive index of the lens. Acts as a chaperone, preventing aggregation of various proteins under a wide range of stress conditions. Required for the correct formation of lens intermediate filaments as part of a complex composed of BFSP1, BFSP2 and CRYAA. The protein is Alpha-crystallin A chain (CRYAA) of Equus caballus (Horse).